A 551-amino-acid polypeptide reads, in one-letter code: Glucans biosynthesis protein D (551 aa).

The segment at residues 1–32 (MDRRRFIKGSMAMAAVCGTSGIASLFSQAAFA) is a signal peptide (tat-type signal).

This sequence belongs to the OpgD/OpgG family. Post-translationally, predicted to be exported by the Tat system. The position of the signal peptide cleavage has not been experimentally proven.

The protein resides in the periplasm. It participates in glycan metabolism; osmoregulated periplasmic glucan (OPG) biosynthesis. Functionally, probably involved in the control of the structural glucose backbone of osmoregulated periplasmic glucans (OPGs). This Escherichia coli O127:H6 (strain E2348/69 / EPEC) protein is Glucans biosynthesis protein D.